A 1013-amino-acid chain; its full sequence is Tolloid-like protein 1 (1013 aa).

An N-terminal signal peptide occupies residues 1-30; it reads MGLQALSPRMLLWLVVSGIVFSRVLWVCAG. The propeptide occupies 31 to 147; it reads LDYDYTFDGN…EQSEKNRVPR (117 aa). The segment at 124–150 is disordered; that stretch reads QNNTMKGKAPPKLSEQSEKNRVPRAAT. In terms of domain architecture, Peptidase M12A spans 148-347; it reads AATSRTERIW…AQARKLYRCP (200 aa). A glycan (N-linked (GlcNAc...) asparagine) is linked at N169. 4 disulfide bridges follow: C190/C346, C210/C232, C212/C213, and C349/C375. H240 contacts Zn(2+). The active site involves E241. Zn(2+) is bound by residues H244 and H250. 2 consecutive CUB domains span residues 349–461 and 462–574; these read CGET…YEAI and CGGE…FFKE. N-linked (GlcNAc...) asparagine glycans are attached at residues N359 and N390. Intrachain disulfides connect C402–C424, C462–C488, C515–C537, C578–C590, C586–C599, C601–C614, C618–C644, C671–C693, C734–C745, C741–C754, C756–C769, C774–C800, C827–C849, C887–C917, and C944–C966. The EGF-like 1; calcium-binding domain occupies 574 to 615; the sequence is EEDECAKPDRGGCEQRCLNTLGSYQCACEPGYELGPDRRSCE. One can recognise a CUB 3 domain in the interval 618–730; sequence CGGLLTKLNG…KGFKAHFFSD (113 aa). Residue N626 is glycosylated (N-linked (GlcNAc...) asparagine). Residues 730-770 form the EGF-like 2; calcium-binding domain; that stretch reads DKDECSKDNGGCQHECVNTMGSYTCQCRNGFVLHENKHDCK. CUB domains lie at 774–886 and 887–1003; these read CEQK…HSTE and CGGR…YKSI.

It depends on Zn(2+) as a cofactor. Highly expressed in brain and kidney and weakly in lung, skeletal muscle. A perceptible level of expression is observed in heart and testis.

The protein resides in the secreted. In terms of biological role, protease which processes procollagen C-propeptides, such as chordin, pro-biglycan and pro-lysyl oxidase. Required for the embryonic development, especially heart development. Predominant protease, which in the development, influences dorsal-ventral patterning and skeletogenesis. The protein is Tolloid-like protein 1 (Tll1) of Mus musculus (Mouse).